The sequence spans 495 residues: Fusicoccadiene 8-ol C-16 hydroxylase (495 aa).

The helical transmembrane segment at 12–32 (VLLALIVWIGTTIIYNIYFHP) threads the bilayer. Residues asparagine 249 and asparagine 317 are each glycosylated (N-linked (GlcNAc...) asparagine). Cysteine 439 serves as a coordination point for heme.

Belongs to the cytochrome P450 family. Heme is required as a cofactor.

It localises to the membrane. It functions in the pathway mycotoxin biosynthesis. Functionally, cytochrome P450 monooxygenase; part of the gene cluster that mediates the biosynthesis of the diterpene glucoside brassicicene C. In the first step of the brassicicene C biosynthesis, the bifunctional diterpene synthase bsc8 that possesses both prenyl transferase and terpene cyclase activity, converts isopentenyl diphosphate and dimethylallyl diphosphate into geranylgeranyl diphosphate (GGDP) that is further converted into fusicocca-2,10(14)-diene, the first precursor for brassicicene C. Fusicocca-2,10(14)-diene is then substrate of cytochrome P450 monooxygenase bsc1 for hydroxylation at the C-8 position. Oxidation at C-16 position to aldehyde is then catalyzed by the cytochrome P450 monooyxygenase bsc7, yielding fusicocca-2,10(14)-diene-8-beta,16-diol. Follows the isomerization of the double bond and reduction of aldehyde to alcohol catalyzed by the short-chain dehydrogenase/reductase bsc3 to yield the diol compound fusicocca-1,10(14)-diene-8 beta,16-diol. The next step is the oxidation at the C-3 position of fusicocca-2,10(14)-diene-8-beta,16-diol catalyzed by the alpha-ketoglutarate dependent dioxygenase bsc9, to produce a triol compound. Methylation of the hydroxy group at position 16 is performed by the methyltransferase bsc6. 16-O-methylation is followed by oxidation at the C-13 position to ketone and an alkyl shift of the methyl group leads to brassicicene C. Although the probable acetyltransferase bsc4 is included in the gene cluster, no acetylation reactions are necessary for brassicicene C biosynthesis. However, the fact that brassicicene E, which is a structurally related compound having an acetoxy group at position 12, was previously isolated from another strain of A.brassicicola suggests that the ATCC 96836 strain might also produce a small amount of brassicicene E. This is Fusicoccadiene 8-ol C-16 hydroxylase from Alternaria brassicicola (Dark leaf spot agent).